A 311-amino-acid polypeptide reads, in one-letter code: Oxidoreductase NAD-binding domain-containing protein 1 (311 aa).

Positions 1–17 are cleaved as a signal peptide; the sequence is MACAAVMIPGLLRCSVG. Residues 50-186 form the FAD-binding FR-type domain; it reads HMERTASVLR…GGVGINPLLS (137 aa). 178–183 is a binding site for NAD(+); sequence GVGINP.

In Pongo abelii (Sumatran orangutan), this protein is Oxidoreductase NAD-binding domain-containing protein 1 (OXNAD1).